The primary structure comprises 143 residues: Granulocyte-macrophage colony-stimulating factor (143 aa).

Residues 1–17 form the signal peptide; that stretch reads MWLQNLLLLGTVVCSFS. O-linked (GalNAc...) threonine glycosylation is present at Thr27. N-linked (GlcNAc...) asparagine glycosylation is found at Asn44 and Asn54. Cystine bridges form between Cys70–Cys112 and Cys104–Cys137.

Belongs to the GM-CSF family. In terms of assembly, monomer. The signaling GM-CSF receptor complex is a dodecamer of two head-to-head hexamers of two alpha, two beta, and two ligand subunits.

It is found in the secreted. Cytokine that stimulates the growth and differentiation of hematopoietic precursor cells from various lineages, including granulocytes, macrophages, eosinophils and erythrocytes. The sequence is that of Granulocyte-macrophage colony-stimulating factor (CSF2) from Bos taurus (Bovine).